The following is an 801-amino-acid chain: Glycerol-3-phosphate acyltransferase 2, mitochondrial (801 aa).

Residues 1-24 (METMLKSNPQMQQRNNHSGQETSL) form a disordered region. At 1–305 (METMLKSNPQ…PGPRLSALGQ (305 aa)) the chain is on the cytoplasmic side. The segment at 180–290 (QLHKGQMKMV…SGQPLLIFLE (111 aa)) is acyltransferase. Residues 205 to 210 (HKSLLD) carry the HXXXXD motif motif. A helical transmembrane segment spans residues 306–332 (AWLGLVVQAVQAGIVPDATLVPVATAY). Residues 333-449 (DLVPDAPCNM…QLLVRRLSRH (117 aa)) lie on the Mitochondrial intermembrane side of the membrane. Residues 450–472 (VLSASVASSAVMSTAIMATLLLL) form a helical membrane-spanning segment. Residues 473 to 795 (KHQKGVVLSQ…DNQDKLEQFI (323 aa)) lie on the Cytoplasmic side of the membrane.

The protein belongs to the GPAT/DAPAT family. In terms of assembly, interacts with PIWIL2. As to expression, expressed in spermatocytes and spermatides.

It is found in the mitochondrion outer membrane. It carries out the reaction sn-glycerol 3-phosphate + an acyl-CoA = a 1-acyl-sn-glycero-3-phosphate + CoA. The catalysed reaction is a 1-acyl-sn-glycero-3-phosphate + an acyl-CoA = a 1,2-diacyl-sn-glycero-3-phosphate + CoA. It catalyses the reaction 1-(9Z-octadecenoyl)-sn-glycero-3-phosphate + (9Z)-octadecenoyl-CoA = 1,2-di-(9Z-octadecenoyl)-sn-glycero-3-phosphate + CoA. The enzyme catalyses 1-(9Z-octadecenoyl)-sn-glycero-3-phosphate + (5Z,8Z,11Z,14Z)-eicosatetraenoyl-CoA = 1-(9Z)-octadecenoyl-2-(5Z,8Z,11Z,14Z)-eicosatetraenoyl-sn-glycero-3-phosphate + CoA. It carries out the reaction (5Z,8Z,11Z,14Z)-eicosatetraenoyl-CoA + sn-glycerol 3-phosphate = 1-(5Z,8Z,11Z,14Z-eicosatetraenoyl)-sn-glycero-3-phosphate + CoA. The protein operates within phospholipid metabolism; CDP-diacylglycerol biosynthesis; CDP-diacylglycerol from sn-glycerol 3-phosphate: step 1/3. Inhibited by N-ethylmaleimide (NEM). Its function is as follows. Transfers an acyl-group from acyl-ACP to the sn-1 position of glycerol-3-phosphate producing a lysophosphatidic acid (LPA), an essential step for the triacylglycerol (TAG) and glycerophospholipids. In vitro also transfers an acyl-group from acyl-ACP to the LPA producing a phosphatidic acid (PA). Prefers arachidonoyl-CoA as the acyl donor. Required for primary processing step during piRNA biosynthesis. Molecular mechanisms by which it promotes piRNA biosynthesis are unclear and do not involve its acyltransferase activity. The chain is Glycerol-3-phosphate acyltransferase 2, mitochondrial from Rattus norvegicus (Rat).